A 669-amino-acid chain; its full sequence is Gametogenetin-binding protein 2 (669 aa).

Disordered stretches follow at residues 375–421 (QEKK…GNPC) and 452–475 (PHSNVSDCGYSSSLEGSEPGSQEG). Positions 376-388 (EKKRQKKNRKKNK) are enriched in basic residues. A compositionally biased stretch (polar residues) spans 398–408 (ETKSANPSQKN).

The protein localises to the cytoplasm. Functionally, may be involved in spermatogenesis. The protein is Gametogenetin-binding protein 2 (ggnbp2) of Xenopus tropicalis (Western clawed frog).